Consider the following 638-residue polypeptide: Zinc finger protein 143 (638 aa).

N-acetylmethionine is present on methionine 1. Lysine 213 is covalently cross-linked (Glycyl lysine isopeptide (Lys-Gly) (interchain with G-Cter in SUMO2)). 4 C2H2-type zinc fingers span residues 237 to 261 (FRCE…ERSH), 267 to 291 (YQCE…VRTH), 297 to 321 (YRCS…IRTH), and 327 to 351 (FKCP…VRTH). At threonine 352 the chain carries Phosphothreonine. C2H2-type zinc fingers lie at residues 357 to 381 (YYCT…VRIH), 387 to 411 (YVCT…HVVH), and 417 to 440 (YNCN…RTAH). Lysine 406 participates in a covalent cross-link: Glycyl lysine isopeptide (Lys-Gly) (interchain with G-Cter in SUMO2).

The protein belongs to the GLI C2H2-type zinc-finger protein family. As to quaternary structure, interacts with CHD8. Forms a complex with HCFC1 and ZNF143. Expressed in all tissues tested, with the strongest expression in ovary.

Its subcellular location is the nucleus. In terms of biological role, transcriptional activator. Activates the gene for selenocysteine tRNA (tRNAsec). Binds to the SPH motif of small nuclear RNA (snRNA) gene promoters. Participates in efficient U6 RNA polymerase III transcription via its interaction with CHD8. In complex with HCFC1 and ZNF143, regulates the expression of several genes, including AP2S1, ESCO2, OPHN1, RBL1, UBXN8 and ZNF32. The chain is Zinc finger protein 143 (ZNF143) from Homo sapiens (Human).